The chain runs to 113 residues: Putative pterin-4-alpha-carbinolamine dehydratase (113 aa).

Belongs to the pterin-4-alpha-carbinolamine dehydratase family.

The catalysed reaction is (4aS,6R)-4a-hydroxy-L-erythro-5,6,7,8-tetrahydrobiopterin = (6R)-L-erythro-6,7-dihydrobiopterin + H2O. In Legionella pneumophila (strain Lens), this protein is Putative pterin-4-alpha-carbinolamine dehydratase.